A 290-amino-acid chain; its full sequence is 4-hydroxy-tetrahydrodipicolinate synthase (290 aa).

Residue Thr-44 participates in pyruvate binding. Residue Tyr-132 is the Proton donor/acceptor of the active site. The active-site Schiff-base intermediate with substrate is the Lys-160. Ile-202 is a pyruvate binding site.

Belongs to the DapA family. As to quaternary structure, homotetramer; dimer of dimers.

It localises to the cytoplasm. The enzyme catalyses L-aspartate 4-semialdehyde + pyruvate = (2S,4S)-4-hydroxy-2,3,4,5-tetrahydrodipicolinate + H2O + H(+). It functions in the pathway amino-acid biosynthesis; L-lysine biosynthesis via DAP pathway; (S)-tetrahydrodipicolinate from L-aspartate: step 3/4. In terms of biological role, catalyzes the condensation of (S)-aspartate-beta-semialdehyde [(S)-ASA] and pyruvate to 4-hydroxy-tetrahydrodipicolinate (HTPA). The chain is 4-hydroxy-tetrahydrodipicolinate synthase from Cereibacter sphaeroides (strain ATCC 17025 / ATH 2.4.3) (Rhodobacter sphaeroides).